Reading from the N-terminus, the 371-residue chain is Cytochrome b (371 aa).

A run of 4 helical transmembrane segments spans residues 25 to 45, 69 to 90, 105 to 125, and 170 to 190; these read FGSMLLTCLVLQVLTGFFLAV, WMMQNLHAIGASMFFICIYIHI, WMSGITLLITLMATALFGYVL, and FFALHFILPFAIISLSSLHII. Heme b is bound by residues histidine 75 and histidine 89. Heme b-binding residues include histidine 174 and histidine 188. Histidine 193 lines the a ubiquinone pocket. The next 4 helical transmembrane spans lie at 218 to 238, 280 to 300, 312 to 332, and 339 to 358; these read HKDLLLLTLMMMFLFIIVSFF, LGGALALVASIMILFTTPFTH, LSQLMFWTLVSTFITITWAAT, and FIAISQVTSMLYFTFFLSIP.

It belongs to the cytochrome b family. As to quaternary structure, the cytochrome bc1 complex contains 3 respiratory subunits (MT-CYB, CYC1 and UQCRFS1), 2 core proteins (UQCRC1 and UQCRC2) and probably 6 low-molecular weight proteins. Heme b is required as a cofactor.

The protein resides in the mitochondrion inner membrane. Functionally, component of the ubiquinol-cytochrome c reductase complex (complex III or cytochrome b-c1 complex) that is part of the mitochondrial respiratory chain. The b-c1 complex mediates electron transfer from ubiquinol to cytochrome c. Contributes to the generation of a proton gradient across the mitochondrial membrane that is then used for ATP synthesis. The protein is Cytochrome b (MT-CYB) of Liasis olivaceus (Olive python).